Consider the following 256-residue polypeptide: Pimeloyl-[acyl-carrier protein] methyl ester esterase (256 aa).

The AB hydrolase-1 domain maps to 15-242 (HLVLLHGWGL…AAHAPFISHP (228 aa)). Substrate is bound by residues Trp22, 82–83 (SL), and 143–147 (FLALQ). Catalysis depends on Ser82, which acts as the Nucleophile. Residues Asp207 and His235 contribute to the active site. Residue His235 participates in substrate binding.

This sequence belongs to the AB hydrolase superfamily. Carboxylesterase BioH family. As to quaternary structure, monomer.

The protein resides in the cytoplasm. It carries out the reaction 6-carboxyhexanoyl-[ACP] methyl ester + H2O = 6-carboxyhexanoyl-[ACP] + methanol + H(+). Its pathway is cofactor biosynthesis; biotin biosynthesis. Functionally, the physiological role of BioH is to remove the methyl group introduced by BioC when the pimeloyl moiety is complete. It allows to synthesize pimeloyl-ACP via the fatty acid synthetic pathway through the hydrolysis of the ester bonds of pimeloyl-ACP esters. The chain is Pimeloyl-[acyl-carrier protein] methyl ester esterase from Escherichia coli O157:H7.